The sequence spans 182 residues: Ribosome-recycling factor (182 aa).

This sequence belongs to the RRF family.

It localises to the cytoplasm. Its function is as follows. Responsible for the release of ribosomes from messenger RNA at the termination of protein biosynthesis. May increase the efficiency of translation by recycling ribosomes from one round of translation to another. This chain is Ribosome-recycling factor, found in Prochlorococcus marinus (strain MIT 9215).